Reading from the N-terminus, the 300-residue chain is Probable phytol kinase, chloroplastic (300 aa).

Residues 1–36 (MAAARPALPSSPTSLLLARSTSAPDLAARRPRRWLV) constitute a chloroplast transit peptide. Helical transmembrane passes span 60 to 78 (LLRD…YSLV), 98 to 118 (VVHV…SNST), 122 to 142 (FFAA…GLGF), 168 to 188 (YVIV…IGIV), 227 to 247 (FISG…LGYI), 254 to 274 (ALGK…IPVT), and 276 to 296 (VVDD…LLFG).

Belongs to the polyprenol kinase family.

It localises to the plastid. The protein resides in the chloroplast membrane. The catalysed reaction is phytol + CTP = phytyl phosphate + CDP + H(+). It functions in the pathway cofactor biosynthesis; tocopherol biosynthesis. Functionally, involved in the activation and reutilization of phytol from chlorophyll degradation in plant metabolism, including tocopherol biosynthesis. Catalyzes the conversion of phytol to phytol monophosphate (PMP). This chain is Probable phytol kinase, chloroplastic, found in Triticum aestivum (Wheat).